The sequence spans 245 residues: Ubiquinone/menaquinone biosynthesis C-methyltransferase UbiE (245 aa).

S-adenosyl-L-methionine contacts are provided by residues Thr-71, Asp-92, and 118–119; that span reads DA.

The protein belongs to the class I-like SAM-binding methyltransferase superfamily. MenG/UbiE family.

The catalysed reaction is a 2-demethylmenaquinol + S-adenosyl-L-methionine = a menaquinol + S-adenosyl-L-homocysteine + H(+). It catalyses the reaction a 2-methoxy-6-(all-trans-polyprenyl)benzene-1,4-diol + S-adenosyl-L-methionine = a 5-methoxy-2-methyl-3-(all-trans-polyprenyl)benzene-1,4-diol + S-adenosyl-L-homocysteine + H(+). Its pathway is quinol/quinone metabolism; menaquinone biosynthesis; menaquinol from 1,4-dihydroxy-2-naphthoate: step 2/2. The protein operates within cofactor biosynthesis; ubiquinone biosynthesis. In terms of biological role, methyltransferase required for the conversion of demethylmenaquinol (DMKH2) to menaquinol (MKH2) and the conversion of 2-polyprenyl-6-methoxy-1,4-benzoquinol (DDMQH2) to 2-polyprenyl-3-methyl-6-methoxy-1,4-benzoquinol (DMQH2). This chain is Ubiquinone/menaquinone biosynthesis C-methyltransferase UbiE, found in Neisseria meningitidis serogroup C (strain 053442).